The sequence spans 100 residues: Putative pterin-4-alpha-carbinolamine dehydratase (100 aa).

This sequence belongs to the pterin-4-alpha-carbinolamine dehydratase family.

The enzyme catalyses (4aS,6R)-4a-hydroxy-L-erythro-5,6,7,8-tetrahydrobiopterin = (6R)-L-erythro-6,7-dihydrobiopterin + H2O. This Alteromonas mediterranea (strain DSM 17117 / CIP 110805 / LMG 28347 / Deep ecotype) protein is Putative pterin-4-alpha-carbinolamine dehydratase.